Here is a 241-residue protein sequence, read N- to C-terminus: Large ribosomal subunit protein uL2 (241 aa).

Residues 201-241 (VDHPHGGGNRQHPGRPTTVSRHAPPGRKVGSIAAKRTGLKR) are disordered.

This sequence belongs to the universal ribosomal protein uL2 family. In terms of assembly, part of the 50S ribosomal subunit. Forms a bridge to the 30S subunit in the 70S ribosome.

In terms of biological role, one of the primary rRNA binding proteins. Required for association of the 30S and 50S subunits to form the 70S ribosome, for tRNA binding and peptide bond formation. It has been suggested to have peptidyltransferase activity; this is somewhat controversial. Makes several contacts with the 16S rRNA in the 70S ribosome. This is Large ribosomal subunit protein uL2 from Methanobrevibacter smithii (strain ATCC 35061 / DSM 861 / OCM 144 / PS).